A 134-amino-acid chain; its full sequence is ATP synthase epsilon chain (134 aa).

Residues 94-104 (AKLAKSRAESH) show a composition bias toward basic and acidic residues. Residues 94–115 (AKLAKSRAESHLEDDDDNTDIN) form a disordered region.

The protein belongs to the ATPase epsilon chain family. As to quaternary structure, F-type ATPases have 2 components, CF(1) - the catalytic core - and CF(0) - the membrane proton channel. CF(1) has five subunits: alpha(3), beta(3), gamma(1), delta(1), epsilon(1). CF(0) has three main subunits: a, b and c.

It is found in the cell membrane. In terms of biological role, produces ATP from ADP in the presence of a proton gradient across the membrane. This chain is ATP synthase epsilon chain, found in Staphylococcus epidermidis (strain ATCC 12228 / FDA PCI 1200).